We begin with the raw amino-acid sequence, 241 residues long: Phosphoribosylaminoimidazole-succinocarboxamide synthase (241 aa).

This sequence belongs to the SAICAR synthetase family.

The catalysed reaction is 5-amino-1-(5-phospho-D-ribosyl)imidazole-4-carboxylate + L-aspartate + ATP = (2S)-2-[5-amino-1-(5-phospho-beta-D-ribosyl)imidazole-4-carboxamido]succinate + ADP + phosphate + 2 H(+). It functions in the pathway purine metabolism; IMP biosynthesis via de novo pathway; 5-amino-1-(5-phospho-D-ribosyl)imidazole-4-carboxamide from 5-amino-1-(5-phospho-D-ribosyl)imidazole-4-carboxylate: step 1/2. The polypeptide is Phosphoribosylaminoimidazole-succinocarboxamide synthase (Lacticaseibacillus casei (strain BL23) (Lactobacillus casei)).